The primary structure comprises 251 residues: 5'-nucleotidase SurE (251 aa).

A divalent metal cation-binding residues include Asp-8, Asp-9, Ser-40, and Asn-95.

The protein belongs to the SurE nucleotidase family. It depends on a divalent metal cation as a cofactor.

The protein resides in the cytoplasm. It catalyses the reaction a ribonucleoside 5'-phosphate + H2O = a ribonucleoside + phosphate. In terms of biological role, nucleotidase that shows phosphatase activity on nucleoside 5'-monophosphates. The chain is 5'-nucleotidase SurE from Maridesulfovibrio salexigens (strain ATCC 14822 / DSM 2638 / NCIMB 8403 / VKM B-1763) (Desulfovibrio salexigens).